Reading from the N-terminus, the 466-residue chain is Glutamate--tRNA ligase 2 (466 aa).

The 'HIGH' region motif lies at 9-19 (PSPTGSLHLGG). The 'KMSKS' region signature appears at 236 to 240 (KLSKR). Position 239 (K239) interacts with ATP.

Belongs to the class-I aminoacyl-tRNA synthetase family. Glutamate--tRNA ligase type 1 subfamily. Monomer.

The protein resides in the cytoplasm. It catalyses the reaction tRNA(Glu) + L-glutamate + ATP = L-glutamyl-tRNA(Glu) + AMP + diphosphate. Functionally, catalyzes the attachment of glutamate to tRNA(Glu) in a two-step reaction: glutamate is first activated by ATP to form Glu-AMP and then transferred to the acceptor end of tRNA(Glu). The protein is Glutamate--tRNA ligase 2 of Anaplasma marginale (strain St. Maries).